The following is a 142-amino-acid chain: Two-component response regulator ARR22 (142 aa).

Residues N23–F140 enclose the Response regulatory domain. 4-aspartylphosphate is present on D74.

Belongs to the ARR family. Type-A subfamily. Two-component system major event consists of a His-to-Asp phosphorelay between a sensor histidine kinase (HK) and a response regulator (RR). In plants, the His-to-Asp phosphorelay involves an additional intermediate named Histidine-containing phosphotransfer protein (HPt). This multistep phosphorelay consists of a His-Asp-His-Asp sequential transfer of a phosphate group between first a His and an Asp of the HK protein, followed by the transfer to a conserved His of the HPt protein and finally the transfer to an Asp in the receiver domain of the RR protein.

It localises to the nucleus. In terms of biological role, functions as a response regulator involved in His-to-Asp phosphorelay signal transduction system. Phosphorylation of the Asp residue in the receiver domain activates the ability of the protein to promote the transcription of target genes. Type-A response regulators seem to act as negative regulators of the cytokinin signaling. The polypeptide is Two-component response regulator ARR22 (ARR22) (Arabidopsis thaliana (Mouse-ear cress)).